Consider the following 258-residue polypeptide: Clathrin light chain 3 (258 aa).

The span at 1 to 18 (MSSTLSNEESGLGDSNRS) shows a compositional bias: polar residues. Positions 1-96 (MSSTLSNEES…PPPSAMEKEE (96 aa)) are disordered. Residue Ser-2 is modified to N-acetylserine. The span at 34–50 (SRFQSQRFDSSFSNFDS) shows a compositional bias: low complexity. The segment covering 66–79 (RPETQSPPSINSFD) has biased composition (polar residues). The segment at 90–152 (SAMEKEEGFA…TIENNKKLNR (63 aa)) is involved in binding clathrin heavy chain. Positions 105–164 (RLNALRLEEKEKEEKEMVQQILEAAEQYKAEFYSKRNVTIENNKKLNREKEKFFLENQEK) form a coiled coil. The span at 224-234 (LKHNPPTHMKP) shows a compositional bias: basic residues. A disordered region spans residues 224-258 (LKHNPPTHMKPKLPSPSGADPNVSVSEQVTVTEKL). Positions 246–258 (VSVSEQVTVTEKL) are enriched in polar residues.

Belongs to the clathrin light chain family. Clathrin coats are formed from molecules containing 3 heavy chains and 3 light chains.

It localises to the cytoplasmic vesicle membrane. Its subcellular location is the membrane. The protein localises to the coated pit. Clathrin is the major protein of the polyhedral coat of coated pits and vesicles. The sequence is that of Clathrin light chain 3 from Arabidopsis thaliana (Mouse-ear cress).